Consider the following 336-residue polypeptide: Protein REVEILLE 7-like (336 aa).

Residues 60–114 (TVTKQREKWSEEEHDRFLEAIKLYGRGWRQIQEHIGTKTAVQIRSHAQKFFSKMA) form the HTH myb-type domain. Positions 87–110 (WRQIQEHIGTKTAVQIRSHAQKFF) form a DNA-binding region, H-T-H motif. Residues 114 to 197 (AQEADSRSEG…KQPFKDDSDI (84 aa)) form a disordered region. A compositionally biased stretch (basic residues) spans 134-144 (RPKRKPAHPYP). Over residues 145 to 158 (RKSPVPYTQSPPPN) the composition is skewed to pro residues. Residues 167-189 (KSPTSVLSSFGSEDQNNYTTSKQ) are compositionally biased toward polar residues.

The protein resides in the nucleus. Its function is as follows. Probable transcription factor. The chain is Protein REVEILLE 7-like (RVE7L) from Arabidopsis thaliana (Mouse-ear cress).